The sequence spans 252 residues: Osmotin-like protein (252 aa).

A signal peptide spans 1-24; that stretch reads MASSSAKILLPLSLLFTLLSLSQS.

The protein resides in the secreted. Its subcellular location is the cell wall. This chain is Osmotin-like protein, found in Solanum lycopersicum (Tomato).